Reading from the N-terminus, the 243-residue chain is Phosphate-specific transport system accessory protein PhoU (243 aa).

It belongs to the PhoU family. As to quaternary structure, homodimer. Interacts with phosphate regulon transcriptional regulatory protein PhoB and ferric uptake regulation protein Fur.

It localises to the cytoplasm. Part of the phosphate (Pho) regulon, which plays a key role in phosphate homeostasis. Encoded together with proteins of the phosphate-specific transport (Pst) system in the polycistronic pstSCAB-phoU operon. PhoU is essential for the repression of the Pho regulon at high phosphate conditions. In this role, it may bind, possibly as a chaperone, to PhoR, PhoB or a PhoR-PhoB complex to promote dephosphorylation of phospho-PhoB, or inhibit formation of the PhoR-PhoB transitory complex. The polypeptide is Phosphate-specific transport system accessory protein PhoU (Edwardsiella tarda).